A 209-amino-acid polypeptide reads, in one-letter code: Protein N-terminal glutamine amidohydrolase (209 aa).

Active-site residues include cysteine 30, histidine 83, and aspartate 99.

This sequence belongs to the NTAQ1 family. In terms of assembly, monomer. In terms of tissue distribution, widely expressed.

The protein localises to the cytoplasm. It is found in the cytosol. It localises to the nucleus. The enzyme catalyses N-terminal L-glutaminyl-[protein] + H2O = N-terminal L-glutamyl-[protein] + NH4(+). Mediates the side-chain deamidation of N-terminal glutamine residues to glutamate, an important step in N-end rule pathway of protein degradation. Conversion of the resulting N-terminal glutamine to glutamate renders the protein susceptible to arginylation, polyubiquitination and degradation as specified by the N-end rule. Does not act on substrates with internal or C-terminal glutamine and does not act on non-glutamine residues in any position. Does not deaminate acetylated N-terminal glutamine. With the exception of proline, all tested second-position residues on substrate peptides do not greatly influence the activity. In contrast, a proline at position 2, virtually abolishes deamidation of N-terminal glutamine. The protein is Protein N-terminal glutamine amidohydrolase (Ntaq1) of Mus musculus (Mouse).